We begin with the raw amino-acid sequence, 146 residues long: BCL7-like protein (146 aa).

The segment at 59 to 146 (MAPPKIKEVK…RDAEMTSKQP (88 aa)) is disordered. 2 stretches are compositionally biased toward polar residues: residues 75–90 (NQVP…TSVT) and 113–134 (DSNQ…TDFS). The span at 135-146 (SMRDAEMTSKQP) shows a compositional bias: basic and acidic residues.

The protein belongs to the BCL7 family. As to expression, ubiquitous.

The protein resides in the nucleus. Required for the terminal differentiation of seam cells, and the differentiation of distal tip cells important for normal somatic gonad and germ cell development. Plays a role in the Wnt signaling pathway, regulating the expression of beta-catenin homologs wrm-1, bar-1 and sys-1, and the localization of wrm-1 and the wnt signaling pathway component pop-1 during asymmetric cell division of seam cells and the Z-cell lineage of the somatic gonad, respectively. May have a pro-apoptotic role, possibly linked to the negative regulation of expression of anti-apoptotic factor ced-9. The sequence is that of BCL7-like protein from Caenorhabditis elegans.